The chain runs to 310 residues: Protoheme IX farnesyltransferase 2 (310 aa).

The next 9 helical transmembrane spans lie at 25–45, 49–69, 87–107, 120–139, 145–165, 176–196, 220–240, 242–262, and 277–297; these read PGII…AAKG, LVLM…GCAI, RVTV…LALG, ALAL…VYSL, SVYG…VGYC, AILL…IAIF, LHIV…PLAG, TGIA…AMAL, and QVFG…ALDF.

Belongs to the UbiA prenyltransferase family. Protoheme IX farnesyltransferase subfamily.

The protein resides in the cell inner membrane. It catalyses the reaction heme b + (2E,6E)-farnesyl diphosphate + H2O = Fe(II)-heme o + diphosphate. It participates in porphyrin-containing compound metabolism; heme O biosynthesis; heme O from protoheme: step 1/1. Functionally, converts heme B (protoheme IX) to heme O by substitution of the vinyl group on carbon 2 of heme B porphyrin ring with a hydroxyethyl farnesyl side group. The protein is Protoheme IX farnesyltransferase 2 of Shewanella baltica (strain OS185).